Consider the following 104-residue polypeptide: L-rhamnose mutarotase (104 aa).

Residue tyrosine 18 coordinates substrate. Histidine 22 acts as the Proton donor in catalysis. Substrate is bound by residues tyrosine 41 and 76-77; that span reads WW.

The protein belongs to the rhamnose mutarotase family. Homodimer.

Its subcellular location is the cytoplasm. It carries out the reaction alpha-L-rhamnose = beta-L-rhamnose. It functions in the pathway carbohydrate metabolism; L-rhamnose metabolism. Functionally, involved in the anomeric conversion of L-rhamnose. The sequence is that of L-rhamnose mutarotase from Sinorhizobium medicae (strain WSM419) (Ensifer medicae).